A 22-amino-acid chain; its full sequence is Superoxide dismutase [Cu-Zn] (22 aa).

This sequence belongs to the Cu-Zn superoxide dismutase family. As to quaternary structure, homodimer. Requires Cu cation as cofactor. Zn(2+) serves as cofactor.

The protein localises to the cytoplasm. It carries out the reaction 2 superoxide + 2 H(+) = H2O2 + O2. Destroys radicals which are normally produced within the cells and which are toxic to biological systems. This chain is Superoxide dismutase [Cu-Zn], found in Hordeum vulgare (Barley).